The sequence spans 163 residues: Mating-type protein ALPHA2 (163 aa).

Residues 80–142 (IEKRSKRFPK…NRRRKERTLT (63 aa)) constitute a DNA-binding region (homeobox; TALE-type).

The protein belongs to the TALE/M-ATYP homeobox family.

The protein resides in the nucleus. Mating type proteins are sequence specific DNA-binding proteins that act as master switches in yeast differentiation by controlling gene expression in a cell type-specific fashion. The sequence is that of Mating-type protein ALPHA2 (MATALPHA2) from Pichia angusta (Yeast).